The chain runs to 358 residues: Spermatogenesis-associated protein 22 (358 aa).

Polar residues-rich tracts occupy residues 1 to 12 (MKRNLNESSARS), 30 to 51 (QPLT…DSYG), 81 to 121 (PASA…TSLR), and 150 to 159 (QQQKQFQTPE). Disordered stretches follow at residues 1-51 (MKRN…DSYG), 81-122 (PASA…SLRT), and 150-172 (QQQK…AEVP).

Component of a multiprotein complex with MEIOB and RPA2. Interacts with MEIOB. Interacts with the complex BRME1:HSF2BP:BRCA2. Specifically expressed in gonadal germ cells, when male and female germ cells progress through prophase of meiosis I.

The protein resides in the chromosome. Functionally, meiosis-specific protein required for homologous recombination in meiosis I. The sequence is that of Spermatogenesis-associated protein 22 from Mus musculus (Mouse).